The chain runs to 322 residues: Nitrilase (322 aa).

The region spanning 5-283 (VRVGAVQSEP…EAILTADIDL (279 aa)) is the CN hydrolase domain. The Proton acceptor role is filled by glutamate 45. Residue lysine 127 is part of the active site. Catalysis depends on cysteine 162, which acts as the Nucleophile.

This sequence belongs to the carbon-nitrogen hydrolase superfamily. Nitrilase family.

The catalysed reaction is a nitrile + 2 H2O = a carboxylate + NH4(+). Functionally, nitrilase that hydrolyzes preferentially 4-cyanopyridine. In Talaromyces marneffei (strain ATCC 18224 / CBS 334.59 / QM 7333) (Penicillium marneffei), this protein is Nitrilase.